The primary structure comprises 100 residues: Urease subunit gamma (100 aa).

This sequence belongs to the urease gamma subunit family. As to quaternary structure, heterotrimer of UreA (gamma), UreB (beta) and UreC (alpha) subunits. Three heterotrimers associate to form the active enzyme.

It localises to the cytoplasm. It carries out the reaction urea + 2 H2O + H(+) = hydrogencarbonate + 2 NH4(+). It participates in nitrogen metabolism; urea degradation; CO(2) and NH(3) from urea (urease route): step 1/1. The polypeptide is Urease subunit gamma (Pseudomonas putida (strain ATCC 700007 / DSM 6899 / JCM 31910 / BCRC 17059 / LMG 24140 / F1)).